The primary structure comprises 438 residues: UDP-N-acetylmuramoylalanine--D-glutamate ligase (438 aa).

112–118 (GSNGKST) serves as a coordination point for ATP.

It belongs to the MurCDEF family.

The protein localises to the cytoplasm. The enzyme catalyses UDP-N-acetyl-alpha-D-muramoyl-L-alanine + D-glutamate + ATP = UDP-N-acetyl-alpha-D-muramoyl-L-alanyl-D-glutamate + ADP + phosphate + H(+). The protein operates within cell wall biogenesis; peptidoglycan biosynthesis. Functionally, cell wall formation. Catalyzes the addition of glutamate to the nucleotide precursor UDP-N-acetylmuramoyl-L-alanine (UMA). The polypeptide is UDP-N-acetylmuramoylalanine--D-glutamate ligase (Salmonella typhi).